Consider the following 76-residue polypeptide: Large ribosomal subunit protein eL20 (76 aa).

The protein belongs to the eukaryotic ribosomal protein eL20 family. As to quaternary structure, part of the 50S ribosomal subunit. Binds 23S rRNA.

The protein is Large ribosomal subunit protein eL20 of Methanococcus maripaludis (strain DSM 14266 / JCM 13030 / NBRC 101832 / S2 / LL).